Consider the following 89-residue polypeptide: Cell division topological specificity factor (89 aa).

The protein belongs to the MinE family.

In terms of biological role, prevents the cell division inhibition by proteins MinC and MinD at internal division sites while permitting inhibition at polar sites. This ensures cell division at the proper site by restricting the formation of a division septum at the midpoint of the long axis of the cell. The protein is Cell division topological specificity factor of Photorhabdus laumondii subsp. laumondii (strain DSM 15139 / CIP 105565 / TT01) (Photorhabdus luminescens subsp. laumondii).